We begin with the raw amino-acid sequence, 394 residues long: MPDKFKRVHVVVMDSVGIGEAPDAAKFGDFDVDTFGHIAKHVGGLNMPEMGKLGLSNIREIDGIKKAEKPLAYYTKMQEASNGKDTMTGHWEIMGLYIDTPFRVFPDGFPDDLINQIEEKTGRKVIGNKPASGTEIMAELGEEHVKTGALIVYTSADSVLQIAAHEDVVPLEELYEICEFCREITLDDPYMLGRIIARPFVGEPGAFVRTPNRHDYALKPFKPTVMDALKDGGKDVIAIGKISDIFDGEGVTESIRTKSNMDGMDQFIAVLDKDFNGMSFLNLVDFDALFGHRRDPQGYADALVDFDGRLVEVMEKLTEDDLLIITADHGNDPTYTGTDHTREFVPLLVYSPRFKNGGSELELRKTFADLGATVADNFDVKMPEYGKSFLKDLK.

Residues Asp-14, Asp-287, His-292, Asp-328, His-329, and His-340 each contribute to the Mn(2+) site.

Belongs to the phosphopentomutase family. Mn(2+) serves as cofactor.

The protein localises to the cytoplasm. The enzyme catalyses 2-deoxy-alpha-D-ribose 1-phosphate = 2-deoxy-D-ribose 5-phosphate. It carries out the reaction alpha-D-ribose 1-phosphate = D-ribose 5-phosphate. Its pathway is carbohydrate degradation; 2-deoxy-D-ribose 1-phosphate degradation; D-glyceraldehyde 3-phosphate and acetaldehyde from 2-deoxy-alpha-D-ribose 1-phosphate: step 1/2. Functionally, isomerase that catalyzes the conversion of deoxy-ribose 1-phosphate (dRib-1-P) and ribose 1-phosphate (Rib-1-P) to deoxy-ribose 5-phosphate (dRib-5-P) and ribose 5-phosphate (Rib-5-P), respectively. The polypeptide is Phosphopentomutase (Listeria welshimeri serovar 6b (strain ATCC 35897 / DSM 20650 / CCUG 15529 / CIP 8149 / NCTC 11857 / SLCC 5334 / V8)).